The following is a 146-amino-acid chain: Aspartate carbamoyltransferase regulatory chain (146 aa).

Zn(2+)-binding residues include Cys102, Cys107, Cys131, and Cys134.

Belongs to the PyrI family. As to quaternary structure, contains catalytic and regulatory chains. The cofactor is Zn(2+).

Its function is as follows. Involved in allosteric regulation of aspartate carbamoyltransferase. In Clostridium acetobutylicum (strain ATCC 824 / DSM 792 / JCM 1419 / IAM 19013 / LMG 5710 / NBRC 13948 / NRRL B-527 / VKM B-1787 / 2291 / W), this protein is Aspartate carbamoyltransferase regulatory chain.